The primary structure comprises 65 residues: Neuropeptide-like protein 28 (65 aa).

The N-terminal stretch at 1–22 is a signal peptide; sequence MISTSSILILVFLLACFMATSA. Residues Tyr29, Tyr39, Tyr47, and Tyr55 each carry the tyrosine amide modification. A Tryptophan amide modification is found at Trp63.

It belongs to the YARP (YGGW-amide related peptide) family.

The protein localises to the secreted. Its function is as follows. May have antimicrobial activity. The sequence is that of Neuropeptide-like protein 28 (nlp-28) from Caenorhabditis elegans.